The sequence spans 409 residues: Arginine deiminase (409 aa).

Cys-399 functions as the Amidino-cysteine intermediate in the catalytic mechanism.

It belongs to the arginine deiminase family.

Its subcellular location is the cytoplasm. It catalyses the reaction L-arginine + H2O = L-citrulline + NH4(+). It functions in the pathway amino-acid degradation; L-arginine degradation via ADI pathway; carbamoyl phosphate from L-arginine: step 1/2. This chain is Arginine deiminase, found in Streptococcus pneumoniae (strain P1031).